A 364-amino-acid polypeptide reads, in one-letter code: tRNA-specific 2-thiouridylase MnmA 1 (364 aa).

ATP is bound by residues 10–17 (GMSGGVDS) and M36. C106 functions as the Nucleophile in the catalytic mechanism. C106 and C204 are joined by a disulfide. G130 is a binding site for ATP. Residues 154–156 (KDQ) form an interaction with tRNA region. The active-site Cysteine persulfide intermediate is the C204. Positions 310 to 311 (RY) are interaction with tRNA.

This sequence belongs to the MnmA/TRMU family.

It localises to the cytoplasm. It catalyses the reaction S-sulfanyl-L-cysteinyl-[protein] + uridine(34) in tRNA + AH2 + ATP = 2-thiouridine(34) in tRNA + L-cysteinyl-[protein] + A + AMP + diphosphate + H(+). Its function is as follows. Catalyzes the 2-thiolation of uridine at the wobble position (U34) of tRNA, leading to the formation of s(2)U34. The protein is tRNA-specific 2-thiouridylase MnmA 1 of Caldanaerobacter subterraneus subsp. tengcongensis (strain DSM 15242 / JCM 11007 / NBRC 100824 / MB4) (Thermoanaerobacter tengcongensis).